The sequence spans 205 residues: Thiamine-phosphate synthase (205 aa).

Residues 35 to 39 and N67 each bind 4-amino-2-methyl-5-(diphosphooxymethyl)pyrimidine; that span reads QYRDK. D68 and D86 together coordinate Mg(2+). T105 serves as a coordination point for 4-amino-2-methyl-5-(diphosphooxymethyl)pyrimidine. 132–134 serves as a coordination point for 2-[(2R,5Z)-2-carboxy-4-methylthiazol-5(2H)-ylidene]ethyl phosphate; it reads SLT. K135 provides a ligand contact to 4-amino-2-methyl-5-(diphosphooxymethyl)pyrimidine. G162 is a 2-[(2R,5Z)-2-carboxy-4-methylthiazol-5(2H)-ylidene]ethyl phosphate binding site.

Belongs to the thiamine-phosphate synthase family. Mg(2+) is required as a cofactor.

The catalysed reaction is 2-[(2R,5Z)-2-carboxy-4-methylthiazol-5(2H)-ylidene]ethyl phosphate + 4-amino-2-methyl-5-(diphosphooxymethyl)pyrimidine + 2 H(+) = thiamine phosphate + CO2 + diphosphate. It carries out the reaction 2-(2-carboxy-4-methylthiazol-5-yl)ethyl phosphate + 4-amino-2-methyl-5-(diphosphooxymethyl)pyrimidine + 2 H(+) = thiamine phosphate + CO2 + diphosphate. The enzyme catalyses 4-methyl-5-(2-phosphooxyethyl)-thiazole + 4-amino-2-methyl-5-(diphosphooxymethyl)pyrimidine + H(+) = thiamine phosphate + diphosphate. The protein operates within cofactor biosynthesis; thiamine diphosphate biosynthesis; thiamine phosphate from 4-amino-2-methyl-5-diphosphomethylpyrimidine and 4-methyl-5-(2-phosphoethyl)-thiazole: step 1/1. In terms of biological role, condenses 4-methyl-5-(beta-hydroxyethyl)thiazole monophosphate (THZ-P) and 2-methyl-4-amino-5-hydroxymethyl pyrimidine pyrophosphate (HMP-PP) to form thiamine monophosphate (TMP). This chain is Thiamine-phosphate synthase, found in Pseudomonas savastanoi pv. phaseolicola (strain 1448A / Race 6) (Pseudomonas syringae pv. phaseolicola (strain 1448A / Race 6)).